A 288-amino-acid chain; its full sequence is Sulfhydrogenase 2 subunit gamma (288 aa).

In terms of domain architecture, FAD-binding FR-type spans 4–103 (YRSYDARIIE…RGPYGNGFPM (100 aa)). [2Fe-2S] cluster-binding residues include Cys-250, Cys-255, Cys-258, and Cys-270.

As to quaternary structure, dimer of heterotetramer of alpha, beta, gamma and delta subunits. The nickel-containing alpha and delta subunits constitute the hydrogenase activity. The beta and gamma subunits (flavin-containing dimer) constitute the sulfur reductase activity. It depends on FAD as a cofactor. [2Fe-2S] cluster serves as cofactor.

Its subcellular location is the cytoplasm. The enzyme catalyses n sulfur + H2 = (n-1) sulfur + hydrogen sulfide + H(+). Functionally, part of a bifunctional enzyme complex that functions as a hydrogen-evolving hydrogenase with sulfur-reducing activity. May play a role in hydrogen cycling during fermentative growth. Activity exhibited with NAD in addition to NADPH. The beta and gamma subunits form the sulfur-reducing component that catalyzes the cytoplasmic production of hydrogen sulfide in the presence of elemental sulfur. The sequence is that of Sulfhydrogenase 2 subunit gamma from Pyrococcus furiosus (strain ATCC 43587 / DSM 3638 / JCM 8422 / Vc1).